The chain runs to 227 residues: PKHD-type hydroxylase Reut_B4660 (227 aa).

In terms of domain architecture, Fe2OG dioxygenase spans 78–178; that stretch reads KVFPPLFNRY…RVSSFFWIQS (101 aa). Fe cation contacts are provided by His-96, Asp-98, and His-159. Residue Arg-169 participates in 2-oxoglutarate binding.

The cofactor is Fe(2+). L-ascorbate is required as a cofactor.

The sequence is that of PKHD-type hydroxylase Reut_B4660 from Cupriavidus pinatubonensis (strain JMP 134 / LMG 1197) (Cupriavidus necator (strain JMP 134)).